A 296-amino-acid polypeptide reads, in one-letter code: uncharacterized protein (296 aa).

The protein to Synechocystis PCC 6803 sll0787 and M.jannaschii MJ0640.

This is an uncharacterized protein from Methanocaldococcus jannaschii (strain ATCC 43067 / DSM 2661 / JAL-1 / JCM 10045 / NBRC 100440) (Methanococcus jannaschii).